We begin with the raw amino-acid sequence, 70 residues long: uncharacterized protein (70 aa).

This is an uncharacterized protein from Haloarcula hispanica (His1V).